The sequence spans 956 residues: Outer capsid protein VP2 (956 aa).

Belongs to the orbivirus VP2 family.

The protein resides in the virion. In terms of biological role, the VP2 protein is one of the two proteins (with VP5) which constitute the virus particle outer capsid. It is the major target of the host immunogenic response. Responsible for viral attachment to target host cell, probably by binding to sialic acid. This attachment induces virion internalization predominantly through clathrin-dependent endocytosis. In Bluetongue virus 11 (isolate USA) (BTV 11), this protein is Outer capsid protein VP2 (Segment-2).